Here is a 125-residue protein sequence, read N- to C-terminus: MVAALLSHPTKVPQTPVPAAFPDTSKNPIEIDTNTIKLLERLSLVDLDSDQALDTLKSSIQFADKIANINTDNVQPLYTVLEHQQLQLRNDQVTAGNCREELLRCAKRTDEDYYVSPPGNIPLEQ.

This sequence belongs to the GatC family. In terms of assembly, subunit of the heterotrimeric GatCAB amidotransferase (AdT) complex, composed of A, B and C subunits.

It localises to the mitochondrion. The enzyme catalyses L-glutamyl-tRNA(Gln) + L-glutamine + ATP + H2O = L-glutaminyl-tRNA(Gln) + L-glutamate + ADP + phosphate + H(+). Allows the formation of correctly charged Gln-tRNA(Gln) through the transamidation of misacylated Glu-tRNA(Gln) in the mitochondria. The reaction takes place in the presence of glutamine and ATP through an activated gamma-phospho-Glu-tRNA(Gln). The sequence is that of Glutamyl-tRNA(Gln) amidotransferase subunit C, mitochondrial from Drosophila mojavensis (Fruit fly).